The following is a 235-amino-acid chain: Phosphoribosylaminoimidazole-succinocarboxamide synthase (235 aa).

This sequence belongs to the SAICAR synthetase family.

It catalyses the reaction 5-amino-1-(5-phospho-D-ribosyl)imidazole-4-carboxylate + L-aspartate + ATP = (2S)-2-[5-amino-1-(5-phospho-beta-D-ribosyl)imidazole-4-carboxamido]succinate + ADP + phosphate + 2 H(+). Its pathway is purine metabolism; IMP biosynthesis via de novo pathway; 5-amino-1-(5-phospho-D-ribosyl)imidazole-4-carboxamide from 5-amino-1-(5-phospho-D-ribosyl)imidazole-4-carboxylate: step 1/2. This Clostridium beijerinckii (strain ATCC 51743 / NCIMB 8052) (Clostridium acetobutylicum) protein is Phosphoribosylaminoimidazole-succinocarboxamide synthase.